A 154-amino-acid polypeptide reads, in one-letter code: uncharacterized protein (154 aa).

This is an uncharacterized protein from Saccharomyces cerevisiae (strain ATCC 204508 / S288c) (Baker's yeast).